The following is a 346-amino-acid chain: MSTPTTPLSYKDAGVDIDAGNALVNNIKSAVKRTRRPEVMGNLGGFGALCELPTKYKHPVLVSGTDGVGTKLRLAIDYKKHDNVGVDLVAMCSNDLIVSGAEPLFFLDYYATGKLDVEVATAVVKGIAEGCVQSGCALIGGETAEMPGMYEGDDYDLAGFCVGVVEKEEIIDGTKVQDGDALIALASSGPHSNGFSLIRKVLEVSKADPAQELAGKPLIDHLLEPTKIYVKSLLKLLEQHDVHAMSHITGGGFWENIPRVLPEDCKAVVKSDSWQWPVVFNWLMENGNISEFEMYRTFNCGVGMVVALPADKVDSALELLTAEGENAWLIGNIAKRNGEEEQVEIL.

This sequence belongs to the AIR synthase family.

The protein resides in the cytoplasm. It catalyses the reaction 2-formamido-N(1)-(5-O-phospho-beta-D-ribosyl)acetamidine + ATP = 5-amino-1-(5-phospho-beta-D-ribosyl)imidazole + ADP + phosphate + H(+). It functions in the pathway purine metabolism; IMP biosynthesis via de novo pathway; 5-amino-1-(5-phospho-D-ribosyl)imidazole from N(2)-formyl-N(1)-(5-phospho-D-ribosyl)glycinamide: step 2/2. The polypeptide is Phosphoribosylformylglycinamidine cyclo-ligase (Shewanella pealeana (strain ATCC 700345 / ANG-SQ1)).